Consider the following 299-residue polypeptide: Virginiamycin B lyase (299 aa).

Residue His229 participates in substrate binding. Position 269 (Glu269) interacts with Mg(2+). His271 functions as the Proton acceptor in the catalytic mechanism. Glu286 lines the Mg(2+) pocket.

Belongs to the Vgb family. Monomer. Requires Mg(2+) as cofactor.

Its function is as follows. Inactivates the type B streptogramin antibiotics by linearizing the lactone ring at the ester linkage, generating a free phenylglycine carboxylate and converting the threonyl moiety into 2-amino-butenoic acid. This Bordetella bronchiseptica (strain ATCC BAA-588 / NCTC 13252 / RB50) (Alcaligenes bronchisepticus) protein is Virginiamycin B lyase.